The following is a 157-amino-acid chain: Transcription elongation factor GreA (157 aa).

The protein belongs to the GreA/GreB family.

Functionally, necessary for efficient RNA polymerase transcription elongation past template-encoded arresting sites. The arresting sites in DNA have the property of trapping a certain fraction of elongating RNA polymerases that pass through, resulting in locked ternary complexes. Cleavage of the nascent transcript by cleavage factors such as GreA or GreB allows the resumption of elongation from the new 3'terminus. GreA releases sequences of 2 to 3 nucleotides. The protein is Transcription elongation factor GreA of Mesorhizobium japonicum (strain LMG 29417 / CECT 9101 / MAFF 303099) (Mesorhizobium loti (strain MAFF 303099)).